The following is a 305-amino-acid chain: UDP-3-O-acyl-N-acetylglucosamine deacetylase (305 aa).

Zn(2+)-binding residues include histidine 79, histidine 238, and aspartate 242. Catalysis depends on histidine 265, which acts as the Proton donor.

Belongs to the LpxC family. It depends on Zn(2+) as a cofactor.

It carries out the reaction a UDP-3-O-[(3R)-3-hydroxyacyl]-N-acetyl-alpha-D-glucosamine + H2O = a UDP-3-O-[(3R)-3-hydroxyacyl]-alpha-D-glucosamine + acetate. The protein operates within glycolipid biosynthesis; lipid IV(A) biosynthesis; lipid IV(A) from (3R)-3-hydroxytetradecanoyl-[acyl-carrier-protein] and UDP-N-acetyl-alpha-D-glucosamine: step 2/6. Its function is as follows. Catalyzes the hydrolysis of UDP-3-O-myristoyl-N-acetylglucosamine to form UDP-3-O-myristoylglucosamine and acetate, the committed step in lipid A biosynthesis. This Vibrio campbellii (strain ATCC BAA-1116) protein is UDP-3-O-acyl-N-acetylglucosamine deacetylase.